We begin with the raw amino-acid sequence, 263 residues long: Glutamate 5-kinase (263 aa).

Residue lysine 14 participates in ATP binding. Substrate-binding residues include serine 52, aspartate 137, and asparagine 149. ATP-binding positions include 169-170 (SD) and 211-217 (TGGIVTK).

The protein belongs to the glutamate 5-kinase family. Homotetramer; oligomerization is not affected by L-proline feedback inhibition. Mg(2+) is required as a cofactor.

It catalyses the reaction L-glutamate + ATP = L-glutamyl 5-phosphate + ADP. It participates in amino-acid biosynthesis; L-proline biosynthesis; L-glutamate 5-semialdehyde from L-glutamate: step 1/2. Inhibited by L-proline as part of a negative feedback loop. Also inhibited by L-proline analogs 3,4-dehydro-L-proline, L-azetidine-2-carboxylic acid and L-4-thiazolidine carboxylic acid. Catalyzes the transfer of a phosphate group to glutamate to form L-glutamate 5-phosphate. May be important for growth and survival. The sequence is that of Glutamate 5-kinase from Leishmania donovani.